We begin with the raw amino-acid sequence, 829 residues long: Periplasmic nitrate reductase (829 aa).

A signal peptide (tat-type signal) is located at residues Met-1 to Ala-30. One can recognise a 4Fe-4S Mo/W bis-MGD-type domain in the interval Ile-41–Asp-97. Residues Cys-48, Cys-51, Cys-55, and Cys-83 each coordinate [4Fe-4S] cluster. Mo-bis(molybdopterin guanine dinucleotide) contacts are provided by residues Lys-85, Gln-152, Asn-177, Cys-181, Trp-214–Met-221, Ser-245–His-249, Gln-264–Asp-266, Met-374, Gln-378, Asn-484, Ser-510–Asp-511, Lys-533, Asp-560, and Thr-719–Thr-728. Phe-795 provides a ligand contact to substrate. Mo-bis(molybdopterin guanine dinucleotide) is bound by residues Asn-803 and Lys-820.

This sequence belongs to the prokaryotic molybdopterin-containing oxidoreductase family. NasA/NapA/NarB subfamily. As to quaternary structure, component of the periplasmic nitrate reductase NapAB complex composed of NapA and NapB. Requires [4Fe-4S] cluster as cofactor. Mo-bis(molybdopterin guanine dinucleotide) is required as a cofactor. In terms of processing, predicted to be exported by the Tat system. The position of the signal peptide cleavage has not been experimentally proven.

The protein localises to the periplasm. The enzyme catalyses 2 Fe(II)-[cytochrome] + nitrate + 2 H(+) = 2 Fe(III)-[cytochrome] + nitrite + H2O. In terms of biological role, catalytic subunit of the periplasmic nitrate reductase complex NapAB. Receives electrons from NapB and catalyzes the reduction of nitrate to nitrite. The sequence is that of Periplasmic nitrate reductase from Aeromonas salmonicida (strain A449).